Reading from the N-terminus, the 454-residue chain is GTPase Obg (454 aa).

The Obg domain maps to 2–159 (SDFVDEAVLH…VDIRLELKTI (158 aa)). The segment at 60–87 (YQRRPHRKAENGAPGQGSNRSGASGADL) is disordered. Positions 160–335 (ADVGLVGFPS…LAYALGEQVA (176 aa)) constitute an OBG-type G domain. GTP contacts are provided by residues 166–173 (GFPSAGKS), 191–195 (FTTLV), 212–215 (DVPG), 287–290 (NKID), and 316–318 (SAA). Positions 173 and 193 each coordinate Mg(2+). The region spanning 353–435 (PREIGEIPFQ…DNPVVFDWDP (83 aa)) is the OCT domain.

Belongs to the TRAFAC class OBG-HflX-like GTPase superfamily. OBG GTPase family. Monomer. Mg(2+) serves as cofactor.

Its subcellular location is the cytoplasm. In terms of biological role, an essential GTPase which binds GTP, GDP and possibly (p)ppGpp with moderate affinity, with high nucleotide exchange rates and a fairly low GTP hydrolysis rate. Plays a role in control of the cell cycle, stress response, ribosome biogenesis and in those bacteria that undergo differentiation, in morphogenesis control. This Thermobifida fusca (strain YX) protein is GTPase Obg.